Here is a 433-residue protein sequence, read N- to C-terminus: GTPase Der (433 aa).

EngA-type G domains are found at residues 5 to 167 (KKVL…GEAN) and 174 to 349 (IKVG…DQLE). Residues 11-18 (GRPNVGKS), 58-62 (DTGGF), 119-122 (NKVD), 180-187 (GKPNSGKS), 227-231 (DTAGI), and 292-295 (SKWD) each bind GTP. Residues 350-429 (FKTSTPDLNK…PILVELREKI (80 aa)) enclose the KH-like domain.

It belongs to the TRAFAC class TrmE-Era-EngA-EngB-Septin-like GTPase superfamily. EngA (Der) GTPase family. Associates with the 50S ribosomal subunit.

In terms of biological role, GTPase that plays an essential role in the late steps of ribosome biogenesis. The polypeptide is GTPase Der (Borreliella afzelii (strain PKo) (Borrelia afzelii)).